A 119-amino-acid chain; its full sequence is MIFGHGIDLQEISAVKKAYDRNPRFAKKVLTPKEWERFESLSGERQMSFLAGRWAGKEAFSKAWGTGIGAVGFKDIEILNNDKGAPVVTQSPFEGNVFISISHSGDFVQASVILEKTKR.

Asp8 and Glu58 together coordinate Mg(2+).

The protein belongs to the P-Pant transferase superfamily. AcpS family. The cofactor is Mg(2+).

Its subcellular location is the cytoplasm. It catalyses the reaction apo-[ACP] + CoA = holo-[ACP] + adenosine 3',5'-bisphosphate + H(+). Its function is as follows. Transfers the 4'-phosphopantetheine moiety from coenzyme A to a Ser of acyl-carrier-protein. This Streptococcus thermophilus (strain CNRZ 1066) protein is Holo-[acyl-carrier-protein] synthase.